A 161-amino-acid polypeptide reads, in one-letter code: 2-C-methyl-D-erythritol 2,4-cyclodiphosphate synthase (161 aa).

A divalent metal cation contacts are provided by D8 and H10. 4-CDP-2-C-methyl-D-erythritol 2-phosphate contacts are provided by residues 8-10 (DVH) and 34-35 (HS). H42 lines the a divalent metal cation pocket. 4-CDP-2-C-methyl-D-erythritol 2-phosphate contacts are provided by residues 56-58 (DIG), 61-65 (FPDTD), 100-106 (AQSPKMA), 132-135 (TTEE), and F139.

The protein belongs to the IspF family. As to quaternary structure, homotrimer. A divalent metal cation serves as cofactor.

It catalyses the reaction 4-CDP-2-C-methyl-D-erythritol 2-phosphate = 2-C-methyl-D-erythritol 2,4-cyclic diphosphate + CMP. Its pathway is isoprenoid biosynthesis; isopentenyl diphosphate biosynthesis via DXP pathway; isopentenyl diphosphate from 1-deoxy-D-xylulose 5-phosphate: step 4/6. Functionally, involved in the biosynthesis of isopentenyl diphosphate (IPP) and dimethylallyl diphosphate (DMAPP), two major building blocks of isoprenoid compounds. Catalyzes the conversion of 4-diphosphocytidyl-2-C-methyl-D-erythritol 2-phosphate (CDP-ME2P) to 2-C-methyl-D-erythritol 2,4-cyclodiphosphate (ME-CPP) with a corresponding release of cytidine 5-monophosphate (CMP). The sequence is that of 2-C-methyl-D-erythritol 2,4-cyclodiphosphate synthase from Clostridioides difficile (strain 630) (Peptoclostridium difficile).